A 108-amino-acid polypeptide reads, in one-letter code: Large ribosomal subunit protein P2A (108 aa).

A disordered region spans residues 62 to 108; it reads LSSVPSGAPAAAAGGASAAAGGEATEEAAEEEAAEESDDDMSFGLFD. Low complexity predominate over residues 68 to 84; sequence GAPAAAAGGASAAAGGE. Over residues 85–102 the composition is skewed to acidic residues; the sequence is ATEEAAEEEAAEESDDDM. S98 is modified (phosphoserine).

The protein belongs to the eukaryotic ribosomal protein P1/P2 family.

Plays an important role in the elongation step of protein synthesis. The chain is Large ribosomal subunit protein P2A (RPP2A) from Candida albicans (Yeast).